Reading from the N-terminus, the 631-residue chain is ATP-dependent RNA helicase mrh4, mitochondrial (631 aa).

The N-terminal 45 residues, methionine 1 to arginine 45, are a transit peptide targeting the mitochondrion. The disordered stretch occupies residues lysine 68–leucine 112. Basic and acidic residues predominate over residues arginine 98 to lysine 108. Positions threonine 141 to arginine 174 match the Q motif motif. Over residues leucine 180 to alanine 193 the composition is skewed to basic and acidic residues. Residues leucine 180–arginine 199 are disordered. A Helicase ATP-binding domain is found at aspartate 194–leucine 406. Alanine 207–threonine 214 is a binding site for ATP. The segment at glutamate 229 to glutamate 249 is disordered. The DEAD box signature appears at aspartate 353–aspartate 356. The Helicase C-terminal domain occupies glycine 455 to isoleucine 631.

Belongs to the DEAD box helicase family. MRH4 subfamily.

Its subcellular location is the mitochondrion. The enzyme catalyses ATP + H2O = ADP + phosphate + H(+). In terms of biological role, ATP-binding RNA helicase involved in mitochondrial RNA metabolism. Required for maintenance of mitochondrial DNA. In Aspergillus fumigatus (strain ATCC MYA-4609 / CBS 101355 / FGSC A1100 / Af293) (Neosartorya fumigata), this protein is ATP-dependent RNA helicase mrh4, mitochondrial (mrh4).